We begin with the raw amino-acid sequence, 186 residues long: Archaemetzincin (186 aa).

Histidine 136 serves as a coordination point for Zn(2+). Glutamate 137 functions as the Proton acceptor in the catalytic mechanism. Zn(2+) is bound by residues histidine 140, histidine 146, cysteine 147, cysteine 152, cysteine 171, and cysteine 174.

Belongs to the peptidase M54 family. In terms of assembly, monomer. It depends on Zn(2+) as a cofactor.

In terms of biological role, probable zinc metalloprotease whose natural substrate is unknown. In Thermococcus kodakarensis (strain ATCC BAA-918 / JCM 12380 / KOD1) (Pyrococcus kodakaraensis (strain KOD1)), this protein is Archaemetzincin.